The primary structure comprises 183 residues: Caltractin ICL1f (183 aa).

Residues 1–19 are compositionally biased toward low complexity; sequence MARRGQQPPQQQQQAQPAQ. The tract at residues 1–30 is disordered; that stretch reads MARRGQQPPQQQQQAQPAQKNQAGKFNPAE. EF-hand domains lie at 39–74, 75–110, 112–147, and 148–183; these read EEVL…LGFE, AKNQ…RISE, DSKA…LGET, and MDDS…KTFA. The Ca(2+) site is built by D52, D54, T56, S58, E63, D88, D90, S92, Q94, and E99.

Belongs to the centrin family. In terms of assembly, monomer.

It localises to the cytoplasm. The protein localises to the cytoskeleton. In terms of biological role, plays a fundamental role in microtubule organizing center structure and function. Component of the infraciliary lattice (ICL) and the ciliary basal bodies. The chain is Caltractin ICL1f (Icl1f) from Paramecium tetraurelia.